The sequence spans 347 residues: 3-isopropylmalate dehydrogenase (347 aa).

76–87 (GPKWTDPNNRPE) lines the NAD(+) pocket. The substrate site is built by R94, R104, R132, and D217. The Mg(2+) site is built by D217, D241, and D245. 275–287 (GSAPDIANEDKAN) serves as a coordination point for NAD(+).

This sequence belongs to the isocitrate and isopropylmalate dehydrogenases family. LeuB type 1 subfamily. As to quaternary structure, homodimer. Requires Mg(2+) as cofactor. Mn(2+) is required as a cofactor.

The protein localises to the cytoplasm. It catalyses the reaction (2R,3S)-3-isopropylmalate + NAD(+) = 4-methyl-2-oxopentanoate + CO2 + NADH. It functions in the pathway amino-acid biosynthesis; L-leucine biosynthesis; L-leucine from 3-methyl-2-oxobutanoate: step 3/4. Its function is as follows. Catalyzes the oxidation of 3-carboxy-2-hydroxy-4-methylpentanoate (3-isopropylmalate) to 3-carboxy-4-methyl-2-oxopentanoate. The product decarboxylates to 4-methyl-2 oxopentanoate. The sequence is that of 3-isopropylmalate dehydrogenase from Staphylococcus epidermidis (strain ATCC 35984 / DSM 28319 / BCRC 17069 / CCUG 31568 / BM 3577 / RP62A).